The primary structure comprises 331 residues: Aldo-keto reductase YhdN (331 aa).

NADP(+) is bound by residues 20-21 and D52; that span reads TW. Y57 functions as the Proton donor in the catalytic mechanism. Residues Q175, 203-208, K214, R227, 280-282, and Q286 each bind NADP(+); these read YGSLCR and GAR.

Belongs to the aldo/keto reductase family. Aldo/keto reductase 11 subfamily. In terms of assembly, monomer.

In terms of biological role, aldo-keto reductase (AKR) that displays broad substrate specificity in vitro. Is able to reduce the standard AKR substrates DL-glyceraldehyde, D-erythrose, methylglyoxal, p-nitrobenzaldehyde, benzaldehyde and butyraldehyde, in the presence of NADPH. Cannot use NADH as a cosubstrate. Does not act on glucose, 2-pyridine carboxyaldehyde, fructose and xylose. The physiological function of this enzyme is not clear. May play a role in bacterial stress response and/or in detoxification of reactive aldehydes. In Bacillus subtilis (strain 168), this protein is Aldo-keto reductase YhdN (yhdN).